The primary structure comprises 268 residues: Pantothenate synthetase (268 aa).

18-25 (MGYLHEGH) is an ATP binding site. The Proton donor role is filled by H25. Q49 contacts (R)-pantoate. Q49 contributes to the beta-alanine binding site. 135-138 (GQKD) contributes to the ATP binding site. Residue Q141 coordinates (R)-pantoate. ATP contacts are provided by residues I164 and 172–175 (LSSR).

This sequence belongs to the pantothenate synthetase family. In terms of assembly, homodimer.

It localises to the cytoplasm. It carries out the reaction (R)-pantoate + beta-alanine + ATP = (R)-pantothenate + AMP + diphosphate + H(+). It participates in cofactor biosynthesis; (R)-pantothenate biosynthesis; (R)-pantothenate from (R)-pantoate and beta-alanine: step 1/1. In terms of biological role, catalyzes the condensation of pantoate with beta-alanine in an ATP-dependent reaction via a pantoyl-adenylate intermediate. The polypeptide is Pantothenate synthetase (Dehalococcoides mccartyi (strain CBDB1)).